Reading from the N-terminus, the 396-residue chain is MSWSFLTRLLEEIHNHSTFVGKIWLTVLIVFRIVLTAVGGESIYYDEQSKFVCNTEQPGCENVCYDAFAPLSHVRFWVFQIILVATPSVMYLGYAIHKIAKMEHGEADKKAARSKPYAMRWKQHRALEETEEDNEEDPMMYPEMELESDKENKEQSQPKPKHDGRRRIREDGLMKIYVLQLLARTVFEVGFLIGQYFLYGFQVHPFYVCSRLPCPHKIDCFISRPTEKTIFLLIMYGVTGLCLLLNIWEMLHLGFGTIRDSLNSKRRELEDPGAYNYPFTWNTPSAPPGYNIAVKPDQIQYTELSNAKIAYKQNKANTAQEQQYGSHEENLPADLEALQREIRMAQERLDLAVQAYSHQNNPHGPREKKAKVGSKAGSNKSTASSKSGDGKTSVWI.

Topologically, residues 1 to 22 (MSWSFLTRLLEEIHNHSTFVGK) are cytoplasmic. A helical membrane pass occupies residues 23-45 (IWLTVLIVFRIVLTAVGGESIYY). Residues 46–75 (DEQSKFVCNTEQPGCENVCYDAFAPLSHVR) lie on the Extracellular side of the membrane. A helical membrane pass occupies residues 76–95 (FWVFQIILVATPSVMYLGYA). The Cytoplasmic portion of the chain corresponds to 96–175 (IHKIAKMEHG…RRIREDGLMK (80 aa)). Positions 145–165 (ELESDKENKEQSQPKPKHDGR) are disordered. Basic and acidic residues predominate over residues 147 to 156 (ESDKENKEQS). A helical transmembrane segment spans residues 176-198 (IYVLQLLARTVFEVGFLIGQYFL). Over 199-228 (YGFQVHPFYVCSRLPCPHKIDCFISRPTEK) the chain is Extracellular. The helical transmembrane segment at 229 to 248 (TIFLLIMYGVTGLCLLLNIW) threads the bilayer. Residues 249 to 396 (EMLHLGFGTI…SGDGKTSVWI (148 aa)) lie on the Cytoplasmic side of the membrane. The disordered stretch occupies residues 353-396 (VQAYSHQNNPHGPREKKAKVGSKAGSNKSTASSKSGDGKTSVWI). Polar residues predominate over residues 376–387 (AGSNKSTASSKS).

It belongs to the connexin family. Gamma-type subfamily. A connexon is composed of a hexamer of connexins. Interacts with CNST.

Its subcellular location is the cell membrane. It is found in the cell junction. The protein resides in the gap junction. One gap junction consists of a cluster of closely packed pairs of transmembrane channels, the connexons, through which materials of low MW diffuse from one cell to a neighboring cell. The polypeptide is Gap junction gamma-1 protein (GJC1) (Homo sapiens (Human)).